The primary structure comprises 707 residues: Polyribonucleotide nucleotidyltransferase (707 aa).

Mg(2+)-binding residues include D486 and D492. In terms of domain architecture, KH spans 553–612; it reads PTVTTLRVLPDKIPIIIGPAGKNIKKIIEETKVKIDLDPEGLVKIYATSKEAAEKAVSMI. The S1 motif domain maps to 622–690; sequence GEVYMGKVTR…DQGRIKVSLK (69 aa).

It belongs to the polyribonucleotide nucleotidyltransferase family. The cofactor is Mg(2+).

Its subcellular location is the cytoplasm. It carries out the reaction RNA(n+1) + phosphate = RNA(n) + a ribonucleoside 5'-diphosphate. Its function is as follows. Involved in mRNA degradation. Catalyzes the phosphorolysis of single-stranded polyribonucleotides processively in the 3'- to 5'-direction. In Sulfurihydrogenibium azorense (strain DSM 15241 / OCM 825 / Az-Fu1), this protein is Polyribonucleotide nucleotidyltransferase.